We begin with the raw amino-acid sequence, 335 residues long: Holliday junction branch migration complex subunit RuvB (335 aa).

The segment at 4 to 184 (ADRLIDATEK…FGIVQRLEFY (181 aa)) is large ATPase domain (RuvB-L). ATP is bound by residues I23, R24, G65, K68, T69, T70, 131–133 (EDY), R174, Y184, and R221. Residue T69 participates in Mg(2+) binding. The small ATPAse domain (RuvB-S) stretch occupies residues 185–255 (SVEDLSYIVG…VAELALNMID (71 aa)). A head domain (RuvB-H) region spans residues 258–335 (KSGFDYMDRK…HHFGLLPKQD (78 aa)). DNA-binding residues include R313 and R318.

The protein belongs to the RuvB family. In terms of assembly, homohexamer. Forms an RuvA(8)-RuvB(12)-Holliday junction (HJ) complex. HJ DNA is sandwiched between 2 RuvA tetramers; dsDNA enters through RuvA and exits via RuvB. An RuvB hexamer assembles on each DNA strand where it exits the tetramer. Each RuvB hexamer is contacted by two RuvA subunits (via domain III) on 2 adjacent RuvB subunits; this complex drives branch migration. In the full resolvosome a probable DNA-RuvA(4)-RuvB(12)-RuvC(2) complex forms which resolves the HJ.

It localises to the cytoplasm. The catalysed reaction is ATP + H2O = ADP + phosphate + H(+). In terms of biological role, the RuvA-RuvB-RuvC complex processes Holliday junction (HJ) DNA during genetic recombination and DNA repair, while the RuvA-RuvB complex plays an important role in the rescue of blocked DNA replication forks via replication fork reversal (RFR). RuvA specifically binds to HJ cruciform DNA, conferring on it an open structure. The RuvB hexamer acts as an ATP-dependent pump, pulling dsDNA into and through the RuvAB complex. RuvB forms 2 homohexamers on either side of HJ DNA bound by 1 or 2 RuvA tetramers; 4 subunits per hexamer contact DNA at a time. Coordinated motions by a converter formed by DNA-disengaged RuvB subunits stimulates ATP hydrolysis and nucleotide exchange. Immobilization of the converter enables RuvB to convert the ATP-contained energy into a lever motion, pulling 2 nucleotides of DNA out of the RuvA tetramer per ATP hydrolyzed, thus driving DNA branch migration. The RuvB motors rotate together with the DNA substrate, which together with the progressing nucleotide cycle form the mechanistic basis for DNA recombination by continuous HJ branch migration. Branch migration allows RuvC to scan DNA until it finds its consensus sequence, where it cleaves and resolves cruciform DNA. The protein is Holliday junction branch migration complex subunit RuvB of Pseudoalteromonas translucida (strain TAC 125).